We begin with the raw amino-acid sequence, 161 residues long: Pleiotrophin-B (161 aa).

Positions 1–23 are cleaved as a signal peptide; sequence MHHQHGLFMLALLAFLLVMTVLG. 5 cysteine pairs are disulfide-bonded: Cys-41–Cys-70, Cys-49–Cys-79, Cys-56–Cys-83, Cys-93–Cys-125, and Cys-103–Cys-135. 2 chondroitin sulfate binding regions span residues 86 to 93 and 117 to 125; these read KKQFGAEC and KRALHNAEC. Residues 136 to 161 form a disordered region; that stretch reads GKVTKPKLQESKKKKKEGKNKEKLLD. The interval 141-161 is chondroitin sulfate A binding; that stretch reads PKLQESKKKKKEGKNKEKLLD.

The protein belongs to the pleiotrophin family. As to expression, expressed in high levels in brain and eye. Lower levels in bone. In the tailbud embryo stage, it is expressed exclusively in the central nervous system, especially in the hind region of the brain.

The protein localises to the secreted. Its function is as follows. Secreted growth factor that mediates its signal through cell-surface proteoglycan and non-proteoglycan receptors. Binds cell-surface proteoglycan receptor via their chondroitin sulfate (CS) groups. Thereby regulates many processes like cell proliferation, cell survival, cell growth, cell differentiation and cell migration. Has antibacterial activity against both Gram-positive and Gram-negative bacteria. The protein is Pleiotrophin-B (ptn-b) of Xenopus laevis (African clawed frog).